The sequence spans 446 residues: 3-phosphoshikimate 1-carboxyvinyltransferase (446 aa).

The 3-phosphoshikimate site is built by K35, S36, and R40. K35 is a phosphoenolpyruvate binding site. Phosphoenolpyruvate contacts are provided by G108 and R137. Positions 182, 184, 332, and 359 each coordinate 3-phosphoshikimate. Q184 is a phosphoenolpyruvate binding site. D332 functions as the Proton acceptor in the catalytic mechanism. Phosphoenolpyruvate is bound by residues R363 and R405.

This sequence belongs to the EPSP synthase family. As to quaternary structure, monomer.

Its subcellular location is the cytoplasm. It carries out the reaction 3-phosphoshikimate + phosphoenolpyruvate = 5-O-(1-carboxyvinyl)-3-phosphoshikimate + phosphate. Its pathway is metabolic intermediate biosynthesis; chorismate biosynthesis; chorismate from D-erythrose 4-phosphate and phosphoenolpyruvate: step 6/7. Catalyzes the transfer of the enolpyruvyl moiety of phosphoenolpyruvate (PEP) to the 5-hydroxyl of shikimate-3-phosphate (S3P) to produce enolpyruvyl shikimate-3-phosphate and inorganic phosphate. In Acaryochloris marina (strain MBIC 11017), this protein is 3-phosphoshikimate 1-carboxyvinyltransferase.